We begin with the raw amino-acid sequence, 157 residues long: Protein SINE4 (157 aa).

Positions 104 to 157 (VTSSSDTTKAKKKTTIRRFVSVTMVLLLSWVLVVLMNHFDHLSMNTQIITLVPT) constitute a KASH domain. Residues 122 to 142 (FVSVTMVLLLSWVLVVLMNHF) traverse the membrane as a helical segment. Residues 154 to 157 (LVPT) carry the Required for nuclear localization motif.

Interacts with SUN1 and SUN2.

The protein resides in the nucleus membrane. This is Protein SINE4 from Arabidopsis thaliana (Mouse-ear cress).